The primary structure comprises 92 residues: YcgL domain-containing protein PBPRA1080 (92 aa).

The YcgL domain occupies M1–K84.

The chain is YcgL domain-containing protein PBPRA1080 from Photobacterium profundum (strain SS9).